A 358-amino-acid chain; its full sequence is Trace amine-associated receptor 7b (358 aa).

Over 1–47 the chain is Extracellular; the sequence is MATDDDRFPWDQDSILSRDLLSASSMQLCYEKLNRSCVRSPYSPGPR. A glycan (N-linked (GlcNAc...) asparagine) is linked at asparagine 34. Disulfide bonds link cysteine 37-cysteine 201 and cysteine 120-cysteine 205. The helical transmembrane segment at 48 to 68 threads the bilayer; the sequence is LILYAVFGFGAVLAVCGNLLV. Over 69-83 the chain is Cytoplasmic; the sequence is MTSILHFRQLHSPAN. Residues 84 to 104 form a helical membrane-spanning segment; it reads FLVASLACADFLVGLTVMPFS. Over 105 to 125 the chain is Extracellular; the sequence is MVRSVEGCWYFGDIYCKFHSS. The chain crosses the membrane as a helical span at residues 126–147; sequence FDGSFCYSSIFHLCFISADRYI. The Cytoplasmic portion of the chain corresponds to 148–166; it reads AVSDPLIYPTRFTASVSGK. Residues 167 to 187 form a helical membrane-spanning segment; that stretch reads CITFSWLLSIIYSFSLFYTGV. At 188 to 211 the chain is on the extracellular side; that stretch reads NEAGLEDLVSALTCVGGCQIAVNQ. N-linked (GlcNAc...) asparagine glycosylation is present at asparagine 210. The chain crosses the membrane as a helical span at residues 212–232; that stretch reads SWVFINFLLFLVPALVMMTVY. Over 233–274 the chain is Cytoplasmic; it reads SKIFLIAKQQAQNIEKMGKQTARASESYKDRVAKRERKAAKT. Residues 275-295 traverse the membrane as a helical segment; the sequence is LGIAVAAFLLSWLPYFIDSII. The Extracellular portion of the chain corresponds to 296-309; that stretch reads DAFLGFVTPTYVYE. Residues 310-332 traverse the membrane as a helical segment; the sequence is ILVWIGYYNSAMNPLIYAFFYPW. The Cytoplasmic segment spans residues 333–358; the sequence is FRKAIKLIVTGKILRENSSATNLFPE.

The protein belongs to the G-protein coupled receptor 1 family.

The protein resides in the cell membrane. Its function is as follows. Olfactory receptor specific for N,N-dimethylalkylamines trace amines, such as N,N-dimethylcyclohexylamine. Trace amine compounds are enriched in animal body fluids and act on trace amine-associated receptors (TAARs) to elicit both intraspecific and interspecific innate behaviors. Ligand-binding causes a conformation change that triggers signaling via G(s)-class of G alpha proteins (GNAL or GNAS). The sequence is that of Trace amine-associated receptor 7b from Rattus norvegicus (Rat).